Here is a 365-residue protein sequence, read N- to C-terminus: Red-sensitive opsin (365 aa).

At 1–51 (MASQLNEAIFAARRRNDDDDTTRSSVFTYTNSNNTRGPFEGPNYHIAPRWV) the chain is on the extracellular side. Residue Asn33 is glycosylated (N-linked (GlcNAc...) asparagine). A helical transmembrane segment spans residues 52-76 (YNLTSIWMIFVVFASVFTNGLVIVA). Residues 77 to 88 (TLKFKKLRHPLN) are Cytoplasmic-facing. Residues 89 to 113 (WILVNMAIADLGETVIASTISVFNQ) form a helical membrane-spanning segment. The Extracellular segment spans residues 114–128 (IFGYFILGHPMCVLE). Cys125 and Cys202 are oxidised to a cystine. Residues 129-148 (GFTVSTCGITALWSLTVIAW) form a helical membrane-spanning segment. At 149–167 (ERWFVVCKPFGNIKFDEKL) the chain is on the cytoplasmic side. Residues 168 to 191 (AATGIIFSWVWSAGWCAPPMFGWS) form a helical membrane-spanning segment. Topologically, residues 192-217 (RFWPHGLKTSCGPDVFSGSSDPGVQS) are extracellular. Residues 218 to 245 (YMLVLMITCCIIPLAIIILCYLHVWWTI) form a helical membrane-spanning segment. At 246–267 (RQVAQQQKESESTQKAEREVSR) the chain is on the cytoplasmic side. Residues 268-291 (MVVVMIVAYIFCWGPYTFFACFAA) form a helical membrane-spanning segment. Topologically, residues 292–299 (FSPGYSFH) are extracellular. A helical transmembrane segment spans residues 300–324 (PLAAALPAYFAKSATIYNPIIYVFM). Lys311 is modified (N6-(retinylidene)lysine). Residues 325–365 (NRQFRNCIYQMFGKKVDDGSEVSSTSRTEVSSVSNSSVSPA) are Cytoplasmic-facing. Positions 342-365 (DGSEVSSTSRTEVSSVSNSSVSPA) are disordered. The span at 345-365 (EVSSTSRTEVSSVSNSSVSPA) shows a compositional bias: low complexity.

This sequence belongs to the G-protein coupled receptor 1 family. Opsin subfamily. Phosphorylated on some or all of the serine and threonine residues present in the C-terminal region.

Its subcellular location is the membrane. In terms of biological role, visual pigments are the light-absorbing molecules that mediate vision. They consist of an apoprotein, opsin, covalently linked to cis-retinal. The sequence is that of Red-sensitive opsin (opn1lw1) from Xenopus laevis (African clawed frog).